A 566-amino-acid chain; its full sequence is MOB kinase activator-like 2 (566 aa).

2 disordered regions span residues 28-57 (ADATNDGSSTAPQTPTASTPRPSSSHSSLS) and 74-118 (GRAV…GAQA). Over residues 35-57 (SSTAPQTPTASTPRPSSSHSSLS) the composition is skewed to low complexity. Positions 85 to 115 (QNGGKGNASGAGGGAGGGGAGGASGGTGGTG) are enriched in gly residues. The Zn(2+) site is built by Cys209, Cys214, His289, and His294. Disordered stretches follow at residues 346-407 (GGCQ…SASA) and 498-541 (FSNN…QCNA). Over residues 367-388 (LQHQSLQQQQQHHNSSSNSTSS) the composition is skewed to low complexity. Residues 394 to 407 (VNSQSNNGSTSASA) show a composition bias toward polar residues. Positions 498–507 (FSNNNNNNHN) are enriched in low complexity. Residues 508-526 (LNHHHHHHHHHGHHGHHHA) are compositionally biased toward basic residues.

It belongs to the MOB1/phocein family. Interacts with and activates trc, also interacts with wts.

Its subcellular location is the cytoplasm. The protein localises to the nucleus. Functionally, required for the normal morphogenesis of a variety of polarized outgrowths including epidermal hairs, bristles, arista laterals, and dendrites. This is MOB kinase activator-like 2 (Mob2) from Drosophila melanogaster (Fruit fly).